A 287-amino-acid chain; its full sequence is Putative ankyrin repeat protein R791 (287 aa).

ANK repeat units lie at residues 40–71 (HNFN…PLVF), 76–105 (NVHD…NIET), 107–134 (NDDV…IDNK), 135–164 (TIFE…DIKA), 165–194 (KDNF…TIDI), 196–224 (DDTY…DYRT), and 225–254 (VDDL…DIEA).

This chain is Putative ankyrin repeat protein R791, found in Acanthamoeba polyphaga (Amoeba).